Consider the following 332-residue polypeptide: Putative symporter YfeH (332 aa).

The protein belongs to the bile acid:sodium symporter (BASS) (TC 2.A.28) family.

This Escherichia coli (strain K12) protein is Putative symporter YfeH (yfeH).